Reading from the N-terminus, the 516-residue chain is Phosphatidylserine decarboxylase proenzyme 2, mitochondrial (516 aa).

The N-terminal 21 residues, 1-21 (MRPRQRFRRFHPRWSKVNLRG), are a transit peptide targeting the mitochondrion. The Mitochondrial matrix segment spans residues 22–33 (FGGVGALKGVKA). Residues 34–52 (LNGMNVRVSMRLKWISNRI) form a helical membrane-spanning segment. The Mitochondrial intermembrane segment spans residues 53–516 (HRIRRSRRLG…GQYVRVGEAL (464 aa)). Active-site charge relay system; for autoendoproteolytic cleavage activity residues include aspartate 159, histidine 373, and serine 488. Serine 488 acts as the Schiff-base intermediate with substrate; via pyruvic acid; for decarboxylase activity in catalysis. Serine 488 carries the pyruvic acid (Ser); by autocatalysis modification.

It belongs to the phosphatidylserine decarboxylase family. PSD-B subfamily. Eukaryotic type I sub-subfamily. In terms of assembly, heterodimer of a large membrane-associated beta subunit and a small pyruvoyl-containing alpha subunit. Requires pyruvate as cofactor. In terms of processing, is synthesized initially as an inactive proenzyme. Formation of the active enzyme involves a self-maturation process in which the active site pyruvoyl group is generated from an internal serine residue via an autocatalytic post-translational modification. Two non-identical subunits are generated from the proenzyme in this reaction, and the pyruvate is formed at the N-terminus of the alpha chain, which is derived from the carboxyl end of the proenzyme. The autoendoproteolytic cleavage occurs by a canonical serine protease mechanism, in which the side chain hydroxyl group of the serine supplies its oxygen atom to form the C-terminus of the beta chain, while the remainder of the serine residue undergoes an oxidative deamination to produce ammonia and the pyruvoyl prosthetic group on the alpha chain. During this reaction, the Ser that is part of the protease active site of the proenzyme becomes the pyruvoyl prosthetic group, which constitutes an essential element of the active site of the mature decarboxylase.

The protein resides in the mitochondrion. The protein localises to the mitochondrion inner membrane. It localises to the nucleus envelope. It is found in the lipid droplet. Its subcellular location is the endoplasmic reticulum membrane. It catalyses the reaction a 1,2-diacyl-sn-glycero-3-phospho-L-serine + H(+) = a 1,2-diacyl-sn-glycero-3-phosphoethanolamine + CO2. It participates in phospholipid metabolism; phosphatidylethanolamine biosynthesis; phosphatidylethanolamine from CDP-diacylglycerol: step 2/2. Functionally, catalyzes the formation of phosphatidylethanolamine (PtdEtn) from phosphatidylserine (PtdSer). Plays a central role in phospholipid metabolism and in the interorganelle trafficking of phosphatidylserine. Together with psd1 and psd3, responsible for the majority of phosphatidylethanolamine synthesis. Plays a role in lipid droplet biogenesis at the endoplasmic reticulum membrane. In Schizosaccharomyces pombe (strain 972 / ATCC 24843) (Fission yeast), this protein is Phosphatidylserine decarboxylase proenzyme 2, mitochondrial.